A 325-amino-acid polypeptide reads, in one-letter code: Xylosidase/arabinosidase (325 aa).

D16 serves as the catalytic Proton acceptor. E224 functions as the Proton donor in the catalytic mechanism.

It belongs to the glycosyl hydrolase 43 family.

The enzyme catalyses Hydrolysis of (1-&gt;4)-beta-D-xylans, to remove successive D-xylose residues from the non-reducing termini.. The catalysed reaction is Hydrolysis of terminal non-reducing alpha-L-arabinofuranoside residues in alpha-L-arabinosides.. The chain is Xylosidase/arabinosidase (xsa) from Bacteroides ovatus.